Reading from the N-terminus, the 93-residue chain is Large ribosomal subunit protein uL23 (93 aa).

This sequence belongs to the universal ribosomal protein uL23 family. In terms of assembly, part of the 50S ribosomal subunit. Contacts protein L29, and trigger factor when it is bound to the ribosome.

Functionally, one of the early assembly proteins it binds 23S rRNA. One of the proteins that surrounds the polypeptide exit tunnel on the outside of the ribosome. Forms the main docking site for trigger factor binding to the ribosome. The chain is Large ribosomal subunit protein uL23 from Campylobacter jejuni subsp. jejuni serotype O:2 (strain ATCC 700819 / NCTC 11168).